Reading from the N-terminus, the 749-residue chain is MAHQKLESVGSGMLDHRVRPGPVPHSQEPESEDMELPLEGYVPEGLELAALRPESPAPEEQECHNHSPDGDSSSDYVNNTSEEEDYDEGLPEEEEGITYYIRYCPEDDSYLEGMDCNGEEYLAHGAHPVDTDECQEAVEEWTDSAGPRPHSHEAEGSQDYPDGQLPIPEDEPSVLEAHDQEEDGHYCASKEGYQDYYPEEANGNTSASPYRLRRGDRDLEDQEEDIDQIVAEIKMSLSMTSITSASEASPEHGPEPGPGDSAEACPPIKASCSPSRHEARPKSLNLPPEAKHPGDPQRGFKPKTRTPEERPKWPHEQVCNGLEQPRKQQRSDLNGPVDNNNIPETKKVASFPSFVAVPGPCEPEDLIDGIIFAANYLGSTQLLSERNPSKNIRMMQAQEAVSRVKRMQKAAKIKKKANSEGDAQTLTEVDLFISAQRIKVLNADTQETMMDHALRTISYIADIGNIVVLMARRRMPRSASQDCIETTPGAQEGKKQYKMICHVFESEDAQLIAQSIGQAFSVAYQEFLRANGINPEDLSQKEYSDIINTQEMYNDDLIHFSNSENCKELQLEKHKGEILGVVVVESGWGSILPTVILANMMNGGPAARSGKLSIGDQIMSINGTSLVGLPLATCQGIIKGLKNQTQVKLNIVSCPPVTTVLIKRPDLKYQLGFSVQNGIICSLMRGGIAERGGVRVGHRIIEINGQSVVATAHEKIVQALSNSVGEIHMKTMPAAMFRLLTGQETPLYI.

Disordered stretches follow at residues 1–94 (MAHQ…PEEE) and 130–343 (DTDE…NNIP). Ser11 carries the phosphoserine modification. Residues 70–80 (GDSSSDYVNNT) show a composition bias toward polar residues. Acidic residues-rich tracts occupy residues 81–94 (SEEE…PEEE) and 131–142 (TDECQEAVEEWT). Positions 185–270 (HYCASKEGYQ…SAEACPPIKA (86 aa)) are STXBP1-binding. Ser208 is subject to Phosphoserine. Positions 218–227 (DLEDQEEDID) are enriched in acidic residues. Polar residues predominate over residues 237–247 (LSMTSITSASE). Positions 305–315 (RTPEERPKWPH) are enriched in basic and acidic residues. Positions 366 to 555 (LIDGIIFAAN…IINTQEMYND (190 aa)) constitute a PID domain. PDZ domains lie at 568 to 653 (ELQL…NIVS) and 659 to 735 (TVLI…MPAA).

As to quaternary structure, part of a multimeric complex containing STXBP1 and syntaxin-1. Binds to the cytoplasmic domain of amyloid-beta protein, and to the nuclear factor NF-kappa-B/p65 via its PDZ domain. Interacts with the N-terminal domain of NECAB3.

Functionally, putative function in synaptic vesicle exocytosis by binding to STXBP1, an essential component of the synaptic vesicle exocytotic machinery. May modulate processing of the amyloid-beta precursor protein (APP) and hence formation of APP-beta. This is Amyloid-beta A4 precursor protein-binding family A member 2 (APBA2) from Pongo abelii (Sumatran orangutan).